Consider the following 156-residue polypeptide: Protein-export protein SecB (156 aa).

This sequence belongs to the SecB family. In terms of assembly, homotetramer, a dimer of dimers. One homotetramer interacts with 1 SecA dimer.

The protein localises to the cytoplasm. One of the proteins required for the normal export of preproteins out of the cell cytoplasm. It is a molecular chaperone that binds to a subset of precursor proteins, maintaining them in a translocation-competent state. It also specifically binds to its receptor SecA. The polypeptide is Protein-export protein SecB (Serratia proteamaculans (strain 568)).